The following is a 388-amino-acid chain: Chorismate synthase (388 aa).

Residues R39 and R45 each contribute to the NADP(+) site. Residues 130 to 132 (RSS), 251 to 252 (NA), G296, 311 to 315 (KPIPT), and R337 contribute to the FMN site.

The protein belongs to the chorismate synthase family. Homotetramer. It depends on FMNH2 as a cofactor.

The catalysed reaction is 5-O-(1-carboxyvinyl)-3-phosphoshikimate = chorismate + phosphate. The protein operates within metabolic intermediate biosynthesis; chorismate biosynthesis; chorismate from D-erythrose 4-phosphate and phosphoenolpyruvate: step 7/7. Its function is as follows. Catalyzes the anti-1,4-elimination of the C-3 phosphate and the C-6 proR hydrogen from 5-enolpyruvylshikimate-3-phosphate (EPSP) to yield chorismate, which is the branch point compound that serves as the starting substrate for the three terminal pathways of aromatic amino acid biosynthesis. This reaction introduces a second double bond into the aromatic ring system. This is Chorismate synthase from Streptococcus uberis (strain ATCC BAA-854 / 0140J).